The chain runs to 1668 residues: Probable histone acetyltransferase HAC-like 1 (1668 aa).

3 disordered regions span residues 1 to 34, 459 to 493, and 528 to 551; these read MNVG…ADGL, QQQP…SEQG, and KGGQ…HDSQ. A compositionally biased stretch (polar residues) spans 11 to 23; it reads GQMSGQAPQTNQV. Over residues 459–469 the composition is skewed to low complexity; the sequence is QQQPNSQHQQS. Composition is skewed to polar residues over residues 470–491 and 536–551; these read ILRS…QLSE and LSSS…HDSQ. A TAZ-type 1 zinc finger spans residues 651 to 732; the sequence is AAGNIYYFRQ…DLQCPVCSNA (82 aa). Positions 886-899 are enriched in basic and acidic residues; that stretch reads KETSETAPEVKNEA. The interval 886-912 is disordered; sequence KETSETAPEVKNEANDSTDITVSKSGK. Residues 900–909 show a composition bias toward polar residues; it reads NDSTDITVSK. The segment at 1002–1079 adopts a PHD-type zinc-finger fold; sequence HFFCIPCYNE…EYTCPNCYVE (78 aa). The CBP/p300-type HAT domain occupies 1094–1530; the sequence is VLGAKDLPRT…VLYHLHNPTA (437 aa). Residues 1217–1219, 1236–1237, and Trp-1292 contribute to the acetyl-CoA site; these read LDS and RT. A coiled-coil region spans residues 1342 to 1365; sequence GAAEDMINQLRQEEDDRKQQKKGK. The ZZ-type zinc-finger motif lies at 1412 to 1475; the sequence is HLQYSCSHCC…TLHPVDIVGL (64 aa). Cys-1417, Cys-1420, Cys-1432, Cys-1435, Cys-1441, Cys-1444, His-1457, and His-1465 together coordinate Zn(2+). A TAZ-type 2 zinc finger spans residues 1553–1634; it reads EVCPDFDLRK…GCNVPRCRDL (82 aa). A coiled-coil region spans residues 1630–1650; it reads RCRDLKEHLRRLQQQSDSRRR.

It is found in the nucleus. The enzyme catalyses L-lysyl-[protein] + acetyl-CoA = N(6)-acetyl-L-lysyl-[protein] + CoA + H(+). Functionally, acetyltransferase enzyme. Acetylates histones, giving a specific tag for transcriptional activation. The chain is Probable histone acetyltransferase HAC-like 1 from Oryza sativa subsp. japonica (Rice).